We begin with the raw amino-acid sequence, 824 residues long: U-box domain-containing protein 24 (824 aa).

A U-box domain is found at 13 to 92 (GAFEAFVCPL…HEWRARNEEK (80 aa)). ARM repeat units lie at residues 133 to 172 (AASK…VLVE), 175 to 214 (DDNK…ELSG), 217 to 258 (PTCE…NLDR), 260 to 299 (DANV…ELAL), 300 to 339 (ANDD…EISS), 341 to 385 (EASA…NLVA), 396 to 435 (DDDE…PAIG), 441 to 481 (VLAG…DIRV), and 486 to 525 (LLRN…EEQA).

As to quaternary structure, interacts with BZR1, BZR2, BZR3 and GSK2. In terms of processing, auto-ubiquitinated. Post-translationally, phosphorylated by GSK2. Phosphorylation of PUB24 increases its cellular stability.

Its subcellular location is the cytoplasm. The protein localises to the cytosol. It localises to the nucleus. The enzyme catalyses S-ubiquitinyl-[E2 ubiquitin-conjugating enzyme]-L-cysteine + [acceptor protein]-L-lysine = [E2 ubiquitin-conjugating enzyme]-L-cysteine + N(6)-ubiquitinyl-[acceptor protein]-L-lysine.. Its pathway is protein modification; protein ubiquitination. Its function is as follows. E3 ubiquitin-protein ligase that functions as a negative regulator of brassinosteroid (BR) signaling. Targets BZR1, a positive regulator of BR signaling pathway, and promotes its degradation via the ubiquitin-26S proteasome pathway. The chain is U-box domain-containing protein 24 from Oryza sativa subsp. japonica (Rice).